The sequence spans 235 residues: uncharacterized protein (235 aa).

This is an uncharacterized protein from Bacillus subtilis (strain 168).